Consider the following 234-residue polypeptide: Riboflavin kinase (234 aa).

Residues 1-98 (MAESTTAVGH…QEIFGDNSSV (98 aa)) form an H-T-H motif-like region. The riboflavin kinase stretch occupies residues 99–234 (VELTGTVTSG…RITVQLKPKE (136 aa)). A CDP-binding site is contributed by 108-113 (GMGEGR). 2 residues coordinate Mg(2+): Thr-137 and Asn-139. Residues Thr-199 and Glu-207 each coordinate FMN. 212-215 (ERLR) is a binding site for CDP.

The protein belongs to the archaeal riboflavin kinase family. Mg(2+) is required as a cofactor.

The enzyme catalyses riboflavin + CTP = CDP + FMN + H(+). It functions in the pathway cofactor biosynthesis; FMN biosynthesis; FMN from riboflavin (CTP route): step 1/1. Catalyzes the CTP-dependent phosphorylation of riboflavin (vitamin B2) to form flavin mononucleotide (FMN). This chain is Riboflavin kinase (ribK), found in Haloquadratum walsbyi (strain DSM 16790 / HBSQ001).